The chain runs to 546 residues: Sterol O-acyltransferase 1 (546 aa).

The residue at position 1 (methionine 1) is an N-acetylmethionine. Positions 1–37 are disordered; sequence MVGEEKMSLRNRLSKSGENPEQDEAQRSVSDTQSNGR. Topologically, residues 1–134 are cytoplasmic; it reads MVGEEKMSLR…LDELFEVDHI (134 aa). The residue at position 8 (serine 8) is a Phosphoserine. Residues 27–37 show a composition bias toward polar residues; sequence RSVSDTQSNGR. Histidine 133 serves as a coordination point for cholesterol. The helical transmembrane segment at 135 to 156 threads the bilayer; the sequence is RTIYHMFIGLLILFILSTLVVD. At 157-176 the chain is on the lumenal side; the sequence is YIDEGRLVLEFNLLGYAFGK. Residues 177–202 form a helical membrane-spanning segment; it reads LPTVIWTWWAMFLSTLSIPYFLFQRW. Topologically, residues 203–214 are cytoplasmic; the sequence is AHGYSKTSHPLI. The helical transmembrane segment at 215-240 threads the bilayer; the sequence is YSLSHGFFFLVFQLGILGFVPTYVVL. Over 241-248 the chain is Lumenal; it reads AYTLPPAS. Residues 249-272 form a helical membrane-spanning segment; the sequence is RFIVILEQIRMVMKAHSFVRENVP. The Cytoplasmic portion of the chain corresponds to 273–315; sequence RVLNAAKEKSSTVPVPTVNQYLYFLFAPTLIYRDSYPRTPTVR. Residues 316-348 traverse the membrane as a helical segment; that stretch reads WGYVAVQFLQVFGCLFYVYYIFERLCAPLFRNI. Residues 349-365 are Lumenal-facing; sequence KQEPFSARVLVLCVFNS. A helical membrane pass occupies residues 366 to 391; the sequence is ILPGVLMLFLTFFAFLHCWLNAFAEM. The Cytoplasmic segment spans residues 392–439; it reads LRFGDRMFYKDWWNSTSYSNYYRTWNVVVHDWLYYYAYKDLLWFFSKR. The FYXDWWN motif signature appears at 399-405; it reads FYKDWWN. Residues asparagine 411, arginine 414, asparagine 417, histidine 421, tyrosine 429, lysine 441, and serine 452 each contribute to the an acyl-CoA site. A helical transmembrane segment spans residues 440–464; the sequence is FKSAAMLAVFALSAVVHEYALAVCL. The active site involves histidine 456. Residues 465–470 lie on the Lumenal side of the membrane; it reads SYFYPV. The helical transmembrane segment at 471–486 threads the bilayer; sequence LFVLFMFFGMAFNFIV. Residues 487–492 are Cytoplasmic-facing; it reads NDSRKR. The chain crosses the membrane as a helical span at residues 493–524; that stretch reads PIWNIMVWASLFLGHGVILCFYSQEWYARQHC. The cysteines at positions 524 and 542 are disulfide-linked. At 525–546 the chain is on the lumenal side; it reads PLKNPTFLDYVRPRSWTCQYVF.

Belongs to the membrane-bound acyltransferase family. Sterol o-acyltransferase subfamily. In terms of assembly, may form homo- or heterodimers. Interacts with UBIAD1.

Its subcellular location is the endoplasmic reticulum membrane. It catalyses the reaction a sterol + a long-chain fatty acyl-CoA = a long-chain 3-hydroxysterol ester + CoA. The catalysed reaction is cholesterol + an acyl-CoA = a cholesterol ester + CoA. It carries out the reaction cholesterol + (9Z)-octadecenoyl-CoA = cholesteryl (9Z-octadecenoate) + CoA. The enzyme catalyses cholesterol + hexadecanoyl-CoA = cholesteryl hexadecanoate + CoA. It catalyses the reaction octadecanoyl-CoA + cholesterol = cholesteryl octadecanoate + CoA. The catalysed reaction is (9Z,12Z)-octadecadienoyl-CoA + cholesterol = cholesteryl (9Z,12Z)-octadecadienoate + CoA. It carries out the reaction (5Z,8Z,11Z,14Z)-eicosatetraenoyl-CoA + cholesterol = cholesteryl (5Z,8Z,11Z,14Z)-eicosatetraenoate + CoA. The enzyme catalyses (9Z)-hexadecenoyl-CoA + cholesterol = cholesteryl (9Z)-hexadecenoate + CoA. It catalyses the reaction (11Z)-octadecenoyl-CoA + cholesterol = cholesteryl (11Z)-octadecenoate + CoA. The catalysed reaction is (7Z)-octadecenoyl-CoA + cholesterol = cholesteryl (7Z)-octadecenoate + CoA. Its function is as follows. Catalyzes the formation of fatty acid-cholesterol esters, which are less soluble in membranes than cholesterol. Plays a role in lipoprotein assembly and dietary cholesterol absorption. Preferentially utilizes oleoyl-CoA ((9Z)-octadecenoyl-CoA) as a substrate: shows a higher activity towards an acyl-CoA substrate with a double bond at the delta-9 position (9Z) than towards saturated acyl-CoA or an unsaturated acyl-CoA with a double bond at the delta-7 (7Z) or delta-11 (11Z) positions. This chain is Sterol O-acyltransferase 1 (SOAT1), found in Cricetulus griseus (Chinese hamster).